The following is a 135-amino-acid chain: Ribonuclease P protein component 2 (135 aa).

It belongs to the eukaryotic/archaeal RNase P protein component 2 family. In terms of assembly, consists of a catalytic RNA component and at least 4-5 protein subunits.

It localises to the cytoplasm. The catalysed reaction is Endonucleolytic cleavage of RNA, removing 5'-extranucleotides from tRNA precursor.. Its function is as follows. Part of ribonuclease P, a protein complex that generates mature tRNA molecules by cleaving their 5'-ends. This is Ribonuclease P protein component 2 from Methanosarcina barkeri (strain Fusaro / DSM 804).